The following is a 304-amino-acid chain: Quinolinate synthase (304 aa).

2 residues coordinate iminosuccinate: H24 and S41. A [4Fe-4S] cluster-binding site is contributed by C86. Iminosuccinate contacts are provided by residues Y112–N114 and S129. C171 lines the [4Fe-4S] cluster pocket. Iminosuccinate contacts are provided by residues H197 to E199 and T214. C259 is a [4Fe-4S] cluster binding site.

Belongs to the quinolinate synthase family. Type 2 subfamily. It depends on [4Fe-4S] cluster as a cofactor.

It localises to the cytoplasm. It carries out the reaction iminosuccinate + dihydroxyacetone phosphate = quinolinate + phosphate + 2 H2O + H(+). The protein operates within cofactor biosynthesis; NAD(+) biosynthesis; quinolinate from iminoaspartate: step 1/1. Functionally, catalyzes the condensation of iminoaspartate with dihydroxyacetone phosphate to form quinolinate. This is Quinolinate synthase from Geotalea uraniireducens (strain Rf4) (Geobacter uraniireducens).